We begin with the raw amino-acid sequence, 138 residues long: Invertebrate-type lysozyme 6 (138 aa).

A signal peptide spans Met-1–Ser-18. The I-type lysozyme domain occupies Asp-19–Ser-138. 6 disulfide bridges follow: Cys-20/Cys-106, Cys-25/Cys-31, Cys-36/Cys-45, Cys-58/Cys-86, Cys-76/Cys-82, and Cys-98/Cys-120. Catalysis depends on Glu-28, which acts as the Proton donor. The Nucleophile role is filled by Asp-39. Lys-51–Asp-57 contributes to the substrate binding site. Substrate-binding positions include Tyr-90 and His-113–Gly-115.

This sequence belongs to the glycosyl hydrolase 22 family. Type-I lysozyme subfamily. As to expression, expressed in pharyngeal gland cells and duct projections, coelomocytes and intestine.

It carries out the reaction Hydrolysis of (1-&gt;4)-beta-linkages between N-acetylmuramic acid and N-acetyl-D-glucosamine residues in a peptidoglycan and between N-acetyl-D-glucosamine residues in chitodextrins.. In terms of biological role, has bacteriolytic activity against Gram-positive bacteria. The protein is Invertebrate-type lysozyme 6 of Caenorhabditis elegans.